The following is a 284-amino-acid chain: Tryptophan 2,3-dioxygenase (284 aa).

Residues 53–57 (FIVQH), Tyr-115, and Arg-119 contribute to the substrate site. Heme is bound at residue His-242. Residue Thr-256 participates in substrate binding.

The protein belongs to the tryptophan 2,3-dioxygenase family. In terms of assembly, homotetramer. Heme serves as cofactor.

The catalysed reaction is L-tryptophan + O2 = N-formyl-L-kynurenine. Its pathway is amino-acid degradation; L-tryptophan degradation via kynurenine pathway; L-kynurenine from L-tryptophan: step 1/2. Heme-dependent dioxygenase that catalyzes the oxidative cleavage of the L-tryptophan (L-Trp) pyrrole ring and converts L-tryptophan to N-formyl-L-kynurenine. Catalyzes the oxidative cleavage of the indole moiety. This Bordetella parapertussis (strain 12822 / ATCC BAA-587 / NCTC 13253) protein is Tryptophan 2,3-dioxygenase.